The sequence spans 216 residues: Uracil-DNA glycosylase (216 aa).

Residue D59 is the Proton acceptor of the active site.

The protein belongs to the uracil-DNA glycosylase (UDG) superfamily. UNG family.

It is found in the cytoplasm. The catalysed reaction is Hydrolyzes single-stranded DNA or mismatched double-stranded DNA and polynucleotides, releasing free uracil.. Its function is as follows. Excises uracil residues from the DNA which can arise as a result of misincorporation of dUMP residues by DNA polymerase or due to deamination of cytosine. This is Uracil-DNA glycosylase from Staphylococcus epidermidis (strain ATCC 12228 / FDA PCI 1200).